The chain runs to 432 residues: Adenylosuccinate synthetase (432 aa).

GTP contacts are provided by residues 12–18 (GDEGKGK) and 40–42 (GHT). D13 acts as the Proton acceptor in catalysis. Mg(2+)-binding residues include D13 and G40. IMP contacts are provided by residues 13–16 (DEGK), 38–41 (NAGH), T129, R143, Q224, T239, and R303. Catalysis depends on H41, which acts as the Proton donor. A substrate-binding site is contributed by 299-305 (VTTGRRR). Residues R305, 331 to 333 (KLD), and 413 to 415 (GVG) contribute to the GTP site.

Belongs to the adenylosuccinate synthetase family. As to quaternary structure, homodimer. Requires Mg(2+) as cofactor.

The protein resides in the cytoplasm. The catalysed reaction is IMP + L-aspartate + GTP = N(6)-(1,2-dicarboxyethyl)-AMP + GDP + phosphate + 2 H(+). Its pathway is purine metabolism; AMP biosynthesis via de novo pathway; AMP from IMP: step 1/2. In terms of biological role, plays an important role in the de novo pathway of purine nucleotide biosynthesis. Catalyzes the first committed step in the biosynthesis of AMP from IMP. The sequence is that of Adenylosuccinate synthetase from Mycobacterium marinum (strain ATCC BAA-535 / M).